The chain runs to 137 residues: Large ribosomal subunit protein uL16 (137 aa).

Belongs to the universal ribosomal protein uL16 family. As to quaternary structure, part of the 50S ribosomal subunit.

Functionally, binds 23S rRNA and is also seen to make contacts with the A and possibly P site tRNAs. In Hydrogenovibrio crunogenus (strain DSM 25203 / XCL-2) (Thiomicrospira crunogena), this protein is Large ribosomal subunit protein uL16.